Reading from the N-terminus, the 452-residue chain is Ribosomal protein uS12 methylthiotransferase RimO (452 aa).

The region spanning 5 to 116 (PTIAFSHLGC…IVDVLQRTES (112 aa)) is the MTTase N-terminal domain. Cys14, Cys50, Cys79, Cys154, Cys158, and Cys161 together coordinate [4Fe-4S] cluster. Residues 140-369 (TTTSAVAYLR…MATQQPIAER (230 aa)) form the Radical SAM core domain. Positions 372–438 (RAQIGRLVDV…IYDLHGEVAS (67 aa)) constitute a TRAM domain.

It belongs to the methylthiotransferase family. RimO subfamily. It depends on [4Fe-4S] cluster as a cofactor.

The protein localises to the cytoplasm. It carries out the reaction L-aspartate(89)-[ribosomal protein uS12]-hydrogen + (sulfur carrier)-SH + AH2 + 2 S-adenosyl-L-methionine = 3-methylsulfanyl-L-aspartate(89)-[ribosomal protein uS12]-hydrogen + (sulfur carrier)-H + 5'-deoxyadenosine + L-methionine + A + S-adenosyl-L-homocysteine + 2 H(+). Catalyzes the methylthiolation of an aspartic acid residue of ribosomal protein uS12. The polypeptide is Ribosomal protein uS12 methylthiotransferase RimO (Synechococcus sp. (strain ATCC 27144 / PCC 6301 / SAUG 1402/1) (Anacystis nidulans)).